The following is a 406-amino-acid chain: Lissencephaly-1 homolog (406 aa).

The 33-residue stretch at 7-39 (QREELNKAIADYLRSNGYESALEAFQKEAEMPG) folds into the LisH domain. A coiled-coil region spans residues 54–81 (TSVIRLQKKVMDLEAKLAEAEKEFQSGG). Residues 74–89 (EKEFQSGGPNKKERSP) are compositionally biased toward basic and acidic residues. The interval 74 to 99 (EKEFQSGGPNKKERSPSEWIPRPPAR) is disordered. WD repeat units lie at residues 104–145 (GHRS…RTLK), 146–185 (GHTDAVQDVSFDQQGKLLASCSADMTIKLWDFQTFENIKT), 188–227 (GHDHNVSSVHFMPNGDFLISASRDKTIKMWELATGYCVKT), 230–269 (GHREWVRTVRVNQDGSLLASCSNDQTVRVWVVANKECKAE), 272–329 (EHEH…CIMT), 332–371 (GHDNWVRGVVWHPGGKYIISASDDKTIRVWDYKNKRCQKT), and 374–406 (AHQHFCTSIDFHRSAPYVITGSVDQTVKVWECR).

Belongs to the WD repeat LIS1/nudF family.

The protein localises to the cytoplasm. It is found in the cytoskeleton. It localises to the microtubule organizing center. Its subcellular location is the centrosome. In terms of biological role, positively regulates the activity of the minus-end directed microtubule motor protein dynein. May enhance dynein-mediated microtubule sliding by targeting dynein to the microtubule plus end. Required for several dynein- and microtubule-dependent processes. This chain is Lissencephaly-1 homolog, found in Branchiostoma floridae (Florida lancelet).